Here is a 327-residue protein sequence, read N- to C-terminus: uncharacterized protein (327 aa).

Transmembrane regions (helical) follow at residues 68 to 88 (SIPAVLFWSVIIPAILYLFYP), 92 to 112 (FLHLWLWTLLAVVLHVFVDIF), 127 to 147 (WVALGLINTFDPFIFISHLAA), and 148 to 168 (IAIWYAGGSPGITFLSLYIIL).

It localises to the cell membrane. May act as a negative regulator for the transcription of mutY, fabL, sspE and yfhP. This is an uncharacterized protein from Bacillus subtilis (strain 168).